Reading from the N-terminus, the 344-residue chain is MFDIAPVSRERDEQIQACIDDKTKPRGALGALEPLAAHLARLLGEAPEIGRPAMLVFAADHGIASAGVSIAPPEVTGQMVANFAAGGAAINVFCRQLGWQLEIIDAGMLSAPPREMGVTDCRLGAGTGPIHKRAAMTLGQVEHGLAFGRERVRSHHAEGTNLIGLGEMGIGNTSSAAAVMAALMGLEAKDCVGRGTGVDAATLKRKQMLVEQALLLHLDMLTSPESVLACVGGFEIVEMTGAILGAAELGIPVLVDGFIATTAALAAVKMFPQSREYLIFAHRSAERAHGLMLAHMEAEPLLSLDMRLGEGTGAALALPLVQAAANFYREMASFSDAGITDVTP.

The active-site Proton acceptor is Glu-310.

The protein belongs to the CobT family.

It carries out the reaction 5,6-dimethylbenzimidazole + nicotinate beta-D-ribonucleotide = alpha-ribazole 5'-phosphate + nicotinate + H(+). Its pathway is nucleoside biosynthesis; alpha-ribazole biosynthesis; alpha-ribazole from 5,6-dimethylbenzimidazole: step 1/2. Its function is as follows. Catalyzes the synthesis of alpha-ribazole-5'-phosphate from nicotinate mononucleotide (NAMN) and 5,6-dimethylbenzimidazole (DMB). This Shewanella amazonensis (strain ATCC BAA-1098 / SB2B) protein is Nicotinate-nucleotide--dimethylbenzimidazole phosphoribosyltransferase.